Consider the following 432-residue polypeptide: Asparagine--tRNA ligase 2 (432 aa).

The protein belongs to the class-II aminoacyl-tRNA synthetase family. As to quaternary structure, homodimer.

It is found in the cytoplasm. It catalyses the reaction tRNA(Asn) + L-asparagine + ATP = L-asparaginyl-tRNA(Asn) + AMP + diphosphate + H(+). The chain is Asparagine--tRNA ligase 2 (asnS2) from Lactiplantibacillus plantarum (strain ATCC BAA-793 / NCIMB 8826 / WCFS1) (Lactobacillus plantarum).